Here is a 752-residue protein sequence, read N- to C-terminus: Microtubule-associated protein tau (752 aa).

Residues 1–567 are disordered; that stretch reads MAEPRQEFDT…PVPMPDLKNV (567 aa). Residue Ala-2 is modified to N-acetylalanine. The residue at position 18 (Tyr-18) is a Phosphotyrosine. Residue Lys-33 forms a Glycyl lysine isopeptide (Lys-Gly) (interchain with G-Cter in ubiquitin) linkage. Phosphoserine occurs at positions 35 and 50. The span at 50–60 shows a compositional bias: polar residues; sequence SETSDAKSTPT. Phosphothreonine occurs at positions 58, 60, and 100. Polar residues predominate over residues 142–151; the sequence is SDWTHQQVPS. Residues 173–182 are compositionally biased toward basic and acidic residues; that stretch reads RPEDVERSHP. Residues Ser-191 and Ser-204 each carry the phosphoserine modification. Over residues 192-204 the composition is skewed to basic and acidic residues; it reads PQKEAWGKDRLGS. Positions 205–218 are enriched in acidic residues; it reads EEEVDEDITMDESS. A compositionally biased stretch (low complexity) spans 219–229; the sequence is QESPPSQASLA. A compositionally biased stretch (polar residues) spans 233-252; it reads ATPQARSVSASGVSGETTSI. 2 stretches are compositionally biased toward basic and acidic residues: residues 289 to 313 and 374 to 385; these read EEGHEAAPEFTFHVEIKASAPKEQD and SKDRTGNDEKKA. 2 stretches are compositionally biased toward polar residues: residues 387–400 and 432–446; these read TSTPSCAKTPSNRP and KYVSSVTPRNGSPGT. Thr-464 carries the post-translational modification Phosphothreonine. An Omega-N-methylarginine modification is found at Arg-466. Residue Lys-474 is modified to N6,N6-dimethyllysine; alternate. N6-acetyllysine; alternate is present on Lys-474. Phosphothreonine occurs at positions 480, 486, and 487. Ser-489 is subject to Phosphoserine. The residue at position 492 (Thr-492) is a Phosphothreonine. Residues Ser-496, Ser-502, and Ser-506 each carry the phosphoserine modification. Residues 498–525 are compositionally biased toward low complexity; it reads EPPKSGERSGYSSPGSPGTPGSRSRTPS. Tyr-508 bears the Phosphotyrosine mark. A phosphoserine mark is found at Ser-509 and Ser-510. Ser-513 is subject to Phosphoserine; by CK1, PDPK1 and TTBK1. Thr-516 and Thr-523 each carry phosphothreonine. A Phosphoserine modification is found at Ser-525. The residue at position 528 (Thr-528) is a Phosphothreonine. N6-acetyllysine is present on Lys-536. Thr-542 bears the Phosphothreonine mark. A phosphoserine mark is found at Ser-546 and Ser-548. Tau/MAP repeat units lie at residues 555–585, 586–616, 617–647, and 648–679; these read QTAPVPMPDLKNVRSKIGSTENLKHQPGGGK, VQIINKKLDLSNVQSKCGSKDNIKHVPGGGS, VHIVYKPVDLSKVTSKCGSLGNIHHKPGGGQ, and VEVKSEKLDFKDRVQSKIGSLDNITHVPGGGN. A Glycyl lysine isopeptide (Lys-Gly) (interchain with G-Cter in ubiquitin) cross-link involves residue Lys-565. N6-acetyllysine; alternate is present on Lys-570. Lys-570 is modified (N6-methyllysine; alternate). Lys-570 is covalently cross-linked (Glycyl lysine isopeptide (Lys-Gly) (interchain with G-Cter in ubiquitin); alternate). Residue Ser-573 is modified to Phosphoserine. A Glycyl lysine isopeptide (Lys-Gly) (interchain with G-Cter in ubiquitin) cross-link involves residue Lys-578. N6-acetyllysine; alternate is present on Lys-592. Lys-592 participates in a covalent cross-link: Glycyl lysine isopeptide (Lys-Gly) (interchain with G-Cter in ubiquitin); alternate. 2 positions are modified to phosphoserine: Ser-596 and Ser-600. Lys-601 carries the post-translational modification N6-acetyllysine. Cysteines 602 and 633 form a disulfide. Residue Ser-604 is modified to Phosphoserine. At Lys-609 the chain carries N6-acetyllysine; alternate. Lys-609 participates in a covalent cross-link: Glycyl lysine isopeptide (Lys-Gly) (interchain with G-Cter in ubiquitin); alternate. Residue Ser-616 is modified to Phosphoserine. The residue at position 622 (Lys-622) is an N6,N6-dimethyllysine; alternate. N6-acetyllysine; alternate is present on residues Lys-622, Lys-628, and Lys-632. Residues Lys-622, Lys-628, and Lys-632 each participate in a glycyl lysine isopeptide (Lys-Gly) (interchain with G-Cter in ubiquitin); alternate cross-link. At Ser-635 the chain carries Phosphoserine. Residues Lys-642, Lys-654, and Lys-658 each carry the N6-acetyllysine; alternate modification. Residues Lys-642, Lys-654, and Lys-658 each participate in a glycyl lysine isopeptide (Lys-Gly) (interchain with G-Cter in ubiquitin); alternate cross-link. Arg-660 bears the Omega-N-methylarginine mark. The residue at position 663 (Ser-663) is a Phosphoserine. A Glycyl lysine isopeptide (Lys-Gly) (interchain with G-Cter in ubiquitin) cross-link involves residue Lys-664. Ser-667 carries the phosphoserine modification. Lys-680 bears the N6-acetyllysine; alternate mark. Lys-680 participates in a covalent cross-link: Glycyl lysine isopeptide (Lys-Gly) (interchain with G-Cter in ubiquitin); alternate. Lys-686 is covalently cross-linked (Glycyl lysine isopeptide (Lys-Gly) (interchain with G-Cter in ubiquitin)). The residue at position 696 (Lys-696) is an N6-acetyllysine; alternate. Lys-696 participates in a covalent cross-link: Glycyl lysine isopeptide (Lys-Gly) (interchain with G-Cter in ubiquitin); alternate. The residue at position 705 (Tyr-705) is a Phosphotyrosine. Ser-707 is subject to Phosphoserine; by CK1 and PDPK1. Ser-711 is subject to Phosphoserine. Thr-714 is subject to Phosphothreonine. A Phosphoserine; by CK1 and PDPK1 modification is found at Ser-715. A phosphoserine mark is found at Ser-720, Ser-727, and Ser-733. Thr-738 bears the Phosphothreonine mark.

In terms of assembly, interacts with MARK1, MARK2, MARK3 and MARK4. Interacts with SQSTM1 when polyubiquitinated. Interacts with PSMC2 through SQSTM1. Interacts with FKBP4. Binds to CSNK1D. Interacts with SGK1. Interacts with EPM2A; the interaction dephosphorylates MAPT at Ser-388. Interacts with PIN1. Interacts with LRRK2. Interacts with LRP1, leading to endocytosis; this interaction is reduced in the presence of LRPAP1/RAP. In terms of processing, polyubiquitinated. Requires functional TRAF6 and may provoke SQSTM1-dependent degradation by the proteasome. Post-translationally, phosphorylated at various serine and threonine residues in S-P or T-P motifs by proline-directed protein kinases (PDPK1, CDK1, CDK5, GSK3, MAPK) (a few sites per protein in interphase, more in mitosis), and at serine residues in K-X-G-S motifs by MAP/microtubule affinity-regulating kinase (MARK1, MARK2, MARK3, MARK4), causing detachment from microtubules, and their disassembly. Fetal Tau is much more phosphorylated than adult Tau. Phosphorylation at Ser-573 by BRSK1 and BRSK2 in neurons affects ability to bind microtubules and plays a role in neuron polarization. Phosphorylated by PHK. Dephosphorylation at several serine and threonine residues by the serine/threonine phosphatase PPP5C. Phosphorylation at Ser-204 by SGK1 mediates microtubule depolymerization and neurite formation in hippocampal neurons. As to expression, expressed in neurons. The larger forms (isoform tau-A and isoform tau-B) are preferentially expressed in the peripheral nervous system while the other are expressed in the central nervous system. Low amounts of the larger forms are also found in limited areas of the CNS.

It localises to the cytoplasm. The protein resides in the cytosol. It is found in the cell membrane. The protein localises to the cytoskeleton. Its subcellular location is the cell projection. It localises to the axon. The protein resides in the dendrite. It is found in the secreted. In terms of biological role, promotes microtubule assembly and stability, and might be involved in the establishment and maintenance of neuronal polarity. The C-terminus binds axonal microtubules while the N-terminus binds neural plasma membrane components, suggesting that tau functions as a linker protein between both. Axonal polarity is predetermined by tau localization (in the neuronal cell) in the domain of the cell body defined by the centrosome. The short isoforms allow plasticity of the cytoskeleton whereas the longer isoforms may preferentially play a role in its stabilization. This Rattus norvegicus (Rat) protein is Microtubule-associated protein tau.